Consider the following 659-residue polypeptide: MIQIGKIFAGRYRIVKQIGRGGMADVYLAKDLILDGEEVAVKVLRTNYQTDPIAVARFQREARAMADLDHPHIVRITDIGEEDGQQYLAMEYVAGLDLKRYIKEHYPLSNEEAVRIMRQILLAMRLAHTRGIVHRDLKPQNILLTPDGTAKVTDFGIAVAFAETSLTQTNSMLGSVHYLSPEQARGSKATVQSDIYAMGIIFYEMLTGHIPYDGDSAVTIALQHFQNPLPSVIAENSSVPQALENVIIKATAKKLTNRYRSVSEMYVDLSSSLSYNRRNESKLIFDETSKADTKTLPKVSQSTLTSIPKVQAQTEHKSIKNPSQAVTEETYQPQAPKKHRFKMRYLILLASLVLVAASLIWILSRSPATIAIPDVAGQTVAEAKATLKKANFEIGEEKTEASEKVEEGRIIRTDPGAGTGRKEGTKINLVVSSGKQSFQISNYVGRKSSDVIAELKEKKVPDNLIKIEEEESNESEAGTVLKQSLPEGTTYDLSKATQIVLTVAKKATTIQLGNYIGRNSTEVISELKQKKVPENLIKIEEEESSESEPGTIMKQSPGAGTTYDVSKPTQIVLTVAKKVTSVAMPSYIGSSLEFTKNNLIQIVGIKEANIEVVEVTTAPAGSVEGMVVEQSPRAGEKVDLNKTRVKISIYKPKTTSATP.

At 1-342 the chain is on the cytoplasmic side; sequence MIQIGKIFAG…PQAPKKHRFK (342 aa). The region spanning 12-273 is the Protein kinase domain; sequence YRIVKQIGRG…EMYVDLSSSL (262 aa). ATP contacts are provided by residues 18-26 and Lys-42; that span reads IGRGGMADV. Asp-136 functions as the Proton acceptor in the catalytic mechanism. A helical transmembrane segment spans residues 343-363; that stretch reads MRYLILLASLVLVAASLIWIL. At 364-659 the chain is on the periplasmic side; the sequence is SRSPATIAIP…YKPKTTSATP (296 aa). 4 consecutive PASTA domains span residues 366–433, 434–505, 506–577, and 578–651; these read SPAT…VVSS, GKQS…TVAK, KATT…TVAK, and KVTS…SIYK. The tract at residues 541-561 is disordered; sequence EEESSESEPGTIMKQSPGAGT.

It belongs to the protein kinase superfamily. Ser/Thr protein kinase family. In terms of assembly, homodimer. StkP forms dimers through its transmembrane and extracellular domains. Dimer formation likely promotes autophosphorylation activity and might be necessary for targeting StkP substrate. Interacts with PhpP via its kinase domain. In terms of processing, autophosphorylation occurs predominantly on threonine residue(s) and weakly on serine residue(s). Dephosphorylated by PhpP.

It is found in the cell membrane. The catalysed reaction is L-seryl-[protein] + ATP = O-phospho-L-seryl-[protein] + ADP + H(+). It catalyses the reaction L-threonyl-[protein] + ATP = O-phospho-L-threonyl-[protein] + ADP + H(+). With respect to regulation, stkP is activated continuously during growth and its activity is inhibited upon growth arrest. Inhibited by staurosporine, a known protein kinase inhibitor. Functionally, protein kinase involved in signal transduction pathways that regulate various cellular processes. Likely senses intracellular peptidoglycan subunits present in the cell division septa of actively growing cells; thus, intracellular unlinked peptidoglycan may serve as the signal molecules that trigger StkP phosphorylation activity on a set of substrates. Plays a crucial role in the regulation of cell shape and cell division of S.pneumoniae through control of at least DivIVA activity. Is involved in competence triggering, via the transduction of signals culminating directly or indirectly in ComD activation. Is important for the resistance of S.pneumoniae to various environmental stress conditions. Appears to be a global regulator that positively controls the transcription of a set of genes encoding functions involved in cell wall metabolism, pyrimidine biosynthesis, DNA repair, iron uptake, and oxidative stress response, and that seems to down-regulate genes employed in competence. Since StkP is unlikely to directly regulate transcription, the input signal must be transmitted through an effector molecule. Identified target substrates that are specifically phosphorylated by StkP in vivo, mainly on threonine residues, are DivIVA, GlmM, PpaC, MapZ, KhpB (also called EloR/Jag) and StkP itself. Autophosphorylated StkP is a substrate for the cotranscribed protein phosphatase PhpP; PhpP and StkP appear to constitute a functional signaling couple in vivo. The polypeptide is Serine/threonine-protein kinase StkP (stkP) (Streptococcus pneumoniae).